A 530-amino-acid chain; its full sequence is MTTIAAVSPLDGRLLGHFPVSKPALIQQQLTKSRRAALLWRELPVTERVKRLSPLKKQLLDNLDRLCETIRLSTGKVRTEALLGEIYPVLDLLAYYQKRAPRILRTRAVSTSPFAFPAATARIERRPYGVVAVISPWNYPFHLSVAPLLTALLAGNAVILKPSELCLPVGQLIVDLFATLDLPDGLVQWVIGDGQTGAELIDARPDLVFFTGGLQTGRAVMQRAARHPIPVMLELGGKDTMLVLADADLKRASAAALYGAFCNSGQVCVSVERLYVQQACFAEFLAMLLKGLSKLKVGHDPHGDVGVMTSARQIDIVQAHYEDAIAQGAKASGPLLRDGNVVQPVVLWDVHHGMKVMREETFGPLLPVMPFSDEAEAIKLANDSDLGLNASIWSQDIIKAERLAGQLDVGNWAINDVLKNVGHSGLPFGGVKQSGFGRYHGAEGLLNFSYPVSGLTNRSRLPKEPNWFPYSASGYENFKGFLDFIYGEDSMLQRGRRNQQALQAFREFSIFDWTQRWQNLKLLFSWTRDD.

Active-site residues include glutamate 234 and cysteine 268.

The protein belongs to the aldehyde dehydrogenase family.

The enzyme catalyses all-trans-4,4'-diapolycopen-4-al + A + H2O = all-trans-4,4'-diapolycopen-4-oate + AH2 + H(+). It carries out the reaction all-trans-4,4'-diapolycopene-4,4'-dial + 2 A + 2 H2O = all-trans-4,4'-diapolycopene-4,4'-dioate + 2 AH2 + 2 H(+). It functions in the pathway carotenoid biosynthesis. In terms of biological role, involved in the biosynthesis of C30 carotenoids. Catalyzes the oxidation of 4,4'-diapolycopene-4,4'-dial to yield 4,4'-diapolycopene-4,4'-dioic acid. Also able to catalyze the oxidation of 4,4'-diapolycopen-4-al to yield 4,4'-diapolycopen-4-oic acid. This chain is 4,4'-diapolycopene aldehyde oxidase, found in Methylomonas sp.